Reading from the N-terminus, the 155-residue chain is Large ribosomal subunit protein eL24 (155 aa).

Positions 98-129 (PEVRKAKRDDKAKADKEKKKADKAARKAEKAK) are enriched in basic and acidic residues. The interval 98–155 (PEVRKAKRDDKAKADKEKKKADKAARKAEKAKLAAAQGSKVSKQQAKGAFQKVAATSR) is disordered.

This sequence belongs to the eukaryotic ribosomal protein eL24 family.

This chain is Large ribosomal subunit protein eL24 (RPL24), found in Candida glabrata (strain ATCC 2001 / BCRC 20586 / JCM 3761 / NBRC 0622 / NRRL Y-65 / CBS 138) (Yeast).